Reading from the N-terminus, the 252-residue chain is PF03932 family protein CutC (252 aa).

Belongs to the CutC family.

It localises to the cytoplasm. This chain is PF03932 family protein CutC, found in Pectobacterium atrosepticum (strain SCRI 1043 / ATCC BAA-672) (Erwinia carotovora subsp. atroseptica).